The following is a 588-amino-acid chain: Proteasome-associated ATPase (588 aa).

Basic and acidic residues predominate over residues 1–10 (MAAHDDDMNR). The tract at residues 1 to 23 (MAAHDDDMNRGIRPGRGSDDPSG) is disordered. Residues 47–94 (RILEERIVELQTNLAGVSAQNERLANTLREARDQIVALKEEVDRLAQP) adopt a coiled-coil conformation. 276 to 281 (GCGKTL) provides a ligand contact to ATP. The interval 587–588 (YL) is docks into pockets in the proteasome alpha-ring.

It belongs to the AAA ATPase family. Homohexamer. Assembles into a hexameric ring structure that caps the 20S proteasome core. Strongly interacts with the prokaryotic ubiquitin-like protein Pup through a hydrophobic interface; the interacting region of ARC lies in its N-terminal coiled-coil domain. There is one Pup binding site per ARC hexamer ring. Upon ATP-binding, the C-terminus of ARC interacts with the alpha-rings of the proteasome core, possibly by binding to the intersubunit pockets.

The protein operates within protein degradation; proteasomal Pup-dependent pathway. Functionally, ATPase which is responsible for recognizing, binding, unfolding and translocation of pupylated proteins into the bacterial 20S proteasome core particle. May be essential for opening the gate of the 20S proteasome via an interaction with its C-terminus, thereby allowing substrate entry and access to the site of proteolysis. Thus, the C-termini of the proteasomal ATPase may function like a 'key in a lock' to induce gate opening and therefore regulate proteolysis. In Streptomyces scabiei (strain 87.22), this protein is Proteasome-associated ATPase.